A 180-amino-acid chain; its full sequence is Bifunctional protein PyrR (180 aa).

Substrate is bound by residues 39-40, 103-111, and Arg136; these read TR and DDVLYTGRT. Residues 99–111 carry the PRPP-binding motif; the sequence is VILIDDVLYTGRT.

The protein belongs to the purine/pyrimidine phosphoribosyltransferase family. PyrR subfamily. In terms of assembly, homodimer and homohexamer; in equilibrium.

It carries out the reaction UMP + diphosphate = 5-phospho-alpha-D-ribose 1-diphosphate + uracil. Its function is as follows. Regulates transcriptional attenuation of the pyrimidine nucleotide (pyr) operon by binding in a uridine-dependent manner to specific sites on pyr mRNA. This disrupts an antiterminator hairpin in the RNA and favors formation of a downstream transcription terminator, leading to a reduced expression of downstream genes. Also displays a weak uracil phosphoribosyltransferase activity which is not physiologically significant. This chain is Bifunctional protein PyrR, found in Halalkalibacterium halodurans (strain ATCC BAA-125 / DSM 18197 / FERM 7344 / JCM 9153 / C-125) (Bacillus halodurans).